The following is a 447-amino-acid chain: Ribulose bisphosphate carboxylase large chain (447 aa).

Residues Asn89 and Thr139 each contribute to the substrate site. The active-site Proton acceptor is Lys141. Position 143 (Lys143) interacts with substrate. Positions 167, 169, and 170 each coordinate Mg(2+). Lys167 is subject to N6-carboxylysine. The active-site Proton acceptor is His260. 3 residues coordinate substrate: Arg261, His293, and Ser345.

The protein belongs to the RuBisCO large chain family. Type I subfamily. As to quaternary structure, heterohexadecamer of 8 large chains and 8 small chains; disulfide-linked. The disulfide link is formed within the large subunit homodimers. Requires Mg(2+) as cofactor. The disulfide bond which can form in the large chain dimeric partners within the hexadecamer appears to be associated with oxidative stress and protein turnover.

It is found in the plastid. It localises to the chloroplast. It carries out the reaction 2 (2R)-3-phosphoglycerate + 2 H(+) = D-ribulose 1,5-bisphosphate + CO2 + H2O. The enzyme catalyses D-ribulose 1,5-bisphosphate + O2 = 2-phosphoglycolate + (2R)-3-phosphoglycerate + 2 H(+). Functionally, ruBisCO catalyzes two reactions: the carboxylation of D-ribulose 1,5-bisphosphate, the primary event in carbon dioxide fixation, as well as the oxidative fragmentation of the pentose substrate in the photorespiration process. Both reactions occur simultaneously and in competition at the same active site. In Ligustrum vulgare (Common privet), this protein is Ribulose bisphosphate carboxylase large chain.